A 104-amino-acid polypeptide reads, in one-letter code: UPF0213 protein in VLF1-GP41 intergenic region (104 aa).

The GIY-YIG domain occupies 9–89 (KVWCVYILRQ…SKYFKLRLIK (81 aa)).

Belongs to the UPF0213 family.

The polypeptide is UPF0213 protein in VLF1-GP41 intergenic region (Autographa californica nuclear polyhedrosis virus (AcMNPV)).